A 426-amino-acid chain; its full sequence is Ankyrin repeat-containing protein BDA1 (426 aa).

ANK repeat units follow at residues 1-29 (MDSK…DILQ), 36-65 (IIHT…SFAK), 70-99 (YGLS…SLVR), 104-134 (GGMT…SIKD), 138-167 (NGET…KMRD), and 182-212 (GGNT…DRNI). Helical transmembrane passes span 288–308 (ALLV…AQLL), 329–349 (WGCN…LLPV), 355–375 (WWYF…MYMM), and 380–400 (FFFL…VLYV).

The protein resides in the cell membrane. Its function is as follows. Involved in plant defense. Required for basal resistance against Pseudomonas syringae pv. tomato DC3000. Required for resistance against nonpathogenic bacteria. May be involved in signaling components that function downstream of SNC2 and upstream of NPR1 and WRKY70 to regulate defense responses. The chain is Ankyrin repeat-containing protein BDA1 from Arabidopsis thaliana (Mouse-ear cress).